We begin with the raw amino-acid sequence, 358 residues long: Glutamate 5-kinase (358 aa).

Lys-9 contacts ATP. Positions 49, 136, and 148 each coordinate substrate. Residues Thr-168 to Asp-169 and Thr-210 to Lys-216 contribute to the ATP site. The PUA domain maps to Asp-275–Asn-353.

It belongs to the glutamate 5-kinase family.

The protein resides in the cytoplasm. It carries out the reaction L-glutamate + ATP = L-glutamyl 5-phosphate + ADP. It participates in amino-acid biosynthesis; L-proline biosynthesis; L-glutamate 5-semialdehyde from L-glutamate: step 1/2. In terms of biological role, catalyzes the transfer of a phosphate group to glutamate to form L-glutamate 5-phosphate. The sequence is that of Glutamate 5-kinase from Streptococcus suis (strain 05ZYH33).